A 628-amino-acid polypeptide reads, in one-letter code: Probable potassium transport system protein Kup (628 aa).

The next 12 membrane-spanning stretches (helical) occupy residues 20-40, 63-83, 110-130, 151-171, 178-198, 212-232, 256-276, 296-316, 346-366, 375-395, 398-418, and 422-442; these read ALLT…SPLY, IISM…VMLV, FVAV…VITP, FILP…PLGT, FGPI…PQII, ALGL…AVVL, WFCV…ALVI, IPLV…VISG, IYMP…VLVF, AYGL…LIYV, TWWK…LLFA, and TKIH…IVVM.

The protein belongs to the HAK/KUP transporter (TC 2.A.72) family.

Its subcellular location is the cell membrane. It carries out the reaction K(+)(in) + H(+)(in) = K(+)(out) + H(+)(out). Its function is as follows. Transport of potassium into the cell. Likely operates as a K(+):H(+) symporter. This Corynebacterium glutamicum (strain R) protein is Probable potassium transport system protein Kup.